The sequence spans 511 residues: uncharacterized protein (511 aa).

14 consecutive transmembrane segments (helical) span residues 7–27 (WVIS…NTAL), 46–66 (VNPI…GPLL), 80–100 (LPVF…ALMA), 107–127 (GAAT…SFPI), 134–154 (LLVL…LGTI), 163–183 (WLFF…YFFL), 200–220 (AGIL…IFLQ), 226–246 (SGYV…LLIV), 266–286 (VLGL…LSAF), 301–321 (LILL…LSAL), 329–349 (GMLG…WLHI), 357–377 (MFAA…AAGL), 394–414 (TAVQ…IGFF), and 437–457 (LFFI…CMNA). Residues 465–486 (AHKPHDKAKTAPEKPAVSAQGL) are disordered.

Belongs to the major facilitator superfamily.

The protein localises to the cell membrane. This is an uncharacterized protein from Bacillus subtilis (strain 168).